A 468-amino-acid polypeptide reads, in one-letter code: 6-phosphogluconate dehydrogenase, decarboxylating (468 aa).

NADP(+) is bound by residues 10 to 15 (GMAVMG), 33 to 35 (NRS), 74 to 76 (IKS), and Asn-102. Substrate is bound by residues Asn-102 and 128–130 (SGG). The active-site Proton acceptor is the Lys-182. Residue 185 to 186 (HN) participates in substrate binding. The Proton donor role is filled by Glu-189. 5 residues coordinate substrate: Tyr-190, Lys-259, Arg-286, Arg-445, and His-451.

This sequence belongs to the 6-phosphogluconate dehydrogenase family. Homodimer.

The catalysed reaction is 6-phospho-D-gluconate + NADP(+) = D-ribulose 5-phosphate + CO2 + NADPH. The protein operates within carbohydrate degradation; pentose phosphate pathway; D-ribulose 5-phosphate from D-glucose 6-phosphate (oxidative stage): step 3/3. Its function is as follows. Catalyzes the oxidative decarboxylation of 6-phosphogluconate to ribulose 5-phosphate and CO(2), with concomitant reduction of NADP to NADPH. The sequence is that of 6-phosphogluconate dehydrogenase, decarboxylating (gnd) from Buchnera aphidicola subsp. Baizongia pistaciae (strain Bp).